The following is a 277-amino-acid chain: Large ribosomal subunit protein uL2 (277 aa).

A disordered region spans residues 222 to 277; sequence GVAMNPVDHPHGGGEGRTSGGRHPVTPWGKPTKGKKTRSNKATDKFIMRSRHQRKK.

It belongs to the universal ribosomal protein uL2 family. As to quaternary structure, part of the 50S ribosomal subunit. Forms a bridge to the 30S subunit in the 70S ribosome.

Functionally, one of the primary rRNA binding proteins. Required for association of the 30S and 50S subunits to form the 70S ribosome, for tRNA binding and peptide bond formation. It has been suggested to have peptidyltransferase activity; this is somewhat controversial. Makes several contacts with the 16S rRNA in the 70S ribosome. The protein is Large ribosomal subunit protein uL2 of Brucella canis (strain ATCC 23365 / NCTC 10854 / RM-666).